Here is a 47-residue protein sequence, read N- to C-terminus: Defensin-like protein 2 (47 aa).

Disulfide bonds link C3/C47, C14/C36, C20/C41, and C24/C43.

Belongs to the DEFL family.

The chain is Defensin-like protein 2 from Zea mays (Maize).